The following is a 223-amino-acid chain: Cytotoxic T-lymphocyte protein 4 (223 aa).

An N-terminal signal peptide occupies residues 1–35 (MACLGFQRHKAQLNLATRTWPCTLLFFLLFIPVFC). Residues 36–161 (KAMHVAQPAV…IDPEPCPDSD (126 aa)) are Extracellular-facing. The 102-residue stretch at 39–140 (HVAQPAVVLA…VELMYPPPYY (102 aa)) folds into the Ig-like V-type domain. Positions 46-50 (VLASS) are homodimerization. 2 disulfides stabilise this stretch: Cys-58/Cys-129 and Cys-85/Cys-103. Asn-113 carries an N-linked (GlcNAc...) asparagine glycan. The tract at residues 134-139 (MYPPPY) is important for interaction with CD80 and CD86. Asn-145 is a glycosylation site (N-linked (GlcNAc...) asparagine). Residues 150 to 155 (YVIDPE) are homodimerization. A helical membrane pass occupies residues 162–182 (FLLWILAAVSSGLFFYSFLLT). Residues 183-223 (AVSLSKMLKKRSPLTTGVYVKMPPTEPECEKQFQPYFIPIN) lie on the Cytoplasmic side of the membrane. Tyr-201 is modified (phosphotyrosine; by TXK and JAK2).

Homodimer; disulfide-linked. Binds to CD80/B7-1 and CD86/B7.2. Interacts with ICOSLG. N-glycosylation is important for dimerization. Post-translationally, phosphorylation at Tyr-201 prevents binding to the AP-2 adapter complex, blocks endocytosis, and leads to retention of CTLA4 on the cell surface. Widely expressed with highest levels in lymphoid tissues. Detected in activated T-cells where expression levels are 30- to 50-fold less than CD28, the stimulatory coreceptor, on the cell surface following activation.

It localises to the cell membrane. In terms of biological role, inhibitory receptor acting as a major negative regulator of T-cell responses. The affinity of CTLA4 for its natural B7 family ligands, CD80 and CD86, is considerably stronger than the affinity of their cognate stimulatory coreceptor CD28. The chain is Cytotoxic T-lymphocyte protein 4 (CTLA4) from Homo sapiens (Human).